Here is a 317-residue protein sequence, read N- to C-terminus: Transaldolase (317 aa).

Lys-132 functions as the Schiff-base intermediate with substrate in the catalytic mechanism.

This sequence belongs to the transaldolase family. Type 1 subfamily. In terms of assembly, homodimer.

The protein localises to the cytoplasm. It carries out the reaction D-sedoheptulose 7-phosphate + D-glyceraldehyde 3-phosphate = D-erythrose 4-phosphate + beta-D-fructose 6-phosphate. The protein operates within carbohydrate degradation; pentose phosphate pathway; D-glyceraldehyde 3-phosphate and beta-D-fructose 6-phosphate from D-ribose 5-phosphate and D-xylulose 5-phosphate (non-oxidative stage): step 2/3. Its function is as follows. Transaldolase is important for the balance of metabolites in the pentose-phosphate pathway. The protein is Transaldolase of Shigella dysenteriae serotype 1 (strain Sd197).